Consider the following 130-residue polypeptide: Small ribosomal subunit protein uS9 (130 aa).

Belongs to the universal ribosomal protein uS9 family.

The polypeptide is Small ribosomal subunit protein uS9 (Histophilus somni (strain 129Pt) (Haemophilus somnus)).